The chain runs to 505 residues: Cytochrome P450 76A2 (505 aa).

Residue Cys-448 participates in heme binding.

The protein belongs to the cytochrome P450 family. Heme serves as cofactor.

The sequence is that of Cytochrome P450 76A2 (CYP76A2) from Solanum melongena (Eggplant).